Consider the following 1583-residue polypeptide: Protein mesh (1583 aa).

A signal peptide spans 1 to 21; sequence MGVKIKLVLAVVLILSANVLG. Residues 22-1182 lie on the Extracellular side of the membrane; that stretch reads QDEIVNDTES…EFSQRALFLT (1161 aa). The NIDO domain occupies 260–415; it reads GIYFRLDRDL…GRHIFRIDEN (156 aa). The 152-residue stretch at 647–798 folds into the AMOP domain; it reads GQRWSNSMCN…VGCETFRFER (152 aa). The region spanning 811–1019 is the VWFD domain; it reads GVAGIFGDPH…HWQLTDREQR (209 aa). Residues 1110–1170 form the Sushi domain; that stretch reads ISCGILETPR…PDYGYTECLR (61 aa). 2 disulfide bridges follow: Cys1112–Cys1152 and Cys1138–Cys1168. The chain crosses the membrane as a helical span at residues 1183–1203; it reads WGVIVAVILPLGLLICLLWFW. Residues 1204 to 1472 lie on the Cytoplasmic side of the membrane; sequence CWHKPRSEGK…QEYSSRTLGA (269 aa). Polar residues predominate over residues 1232 to 1250; the sequence is LRSSSMGNITDTMKSSTIP. The interval 1232 to 1448 is disordered; that stretch reads LRSSSMGNIT…IPEAPKSAPV (217 aa). Positions 1291-1300 are enriched in basic and acidic residues; the sequence is GKSDSGKSDK. Over residues 1405-1416 the composition is skewed to polar residues; that stretch reads PIPSQYSPTYSE. The chain crosses the membrane as a helical span at residues 1473–1493; it reads TWGIISAVMLPIIIILICVAW. Residues 1494–1583 lie on the Extracellular side of the membrane; that stretch reads RILQRRKAEE…RQWGGETEIN (90 aa). Basic and acidic residues predominate over residues 1521 to 1539; it reads DSVKVTSDDESIPYKKDVT. The segment at 1521–1583 is disordered; sequence DSVKVTSDDE…RQWGGETEIN (63 aa).

As to expression, in fifth instar larvae, expressed in midgut epithelial cells (at protein level).

The protein resides in the membrane. Its subcellular location is the cell junction. It localises to the septate junction. It is found in the lateral cell membrane. May be required for the proper organization of smooth septate junctions and for the barrier function of the midgut epithelium. This is Protein mesh from Bombyx mori (Silk moth).